An 85-amino-acid chain; its full sequence is Splicing factor 3B subunit 5 (85 aa).

This sequence belongs to the SF3B5 family. As to quaternary structure, component of the SF3B complex. SF3B complex associates with the splicing factor SF3A complex and a 12S RNA unit to form the U2 small nuclear ribonucleoproteins complex (U2 snRNP). Identified in the SAGA transcription regulatory histone acetylation (HAT) complex; the interaction is RNA-independent.

It is found in the nucleus. Involved in pre-mRNA splicing as component of spliceosome. As part of the spliceosome complex, plays a role in the regulation of spermatogonial differentiation. When associated with the SAGA transcription regulatory histone acetylation (HAT) complex, might be involved in the transcriptional activation of a subset of SAGA-regulated genes. This chain is Splicing factor 3B subunit 5, found in Drosophila melanogaster (Fruit fly).